The following is a 328-amino-acid chain: DNA-directed RNA polymerase subunit alpha (328 aa).

Residues 1–234 (MQNSPTEYLK…GQLSVFADLE (234 aa)) form an alpha N-terminal domain (alpha-NTD) region. Residues 248–328 (VDPILLRPVD…NWPPAGLEKV (81 aa)) form an alpha C-terminal domain (alpha-CTD) region.

It belongs to the RNA polymerase alpha chain family. Homodimer. The RNAP catalytic core consists of 2 alpha, 1 beta, 1 beta' and 1 omega subunit. When a sigma factor is associated with the core the holoenzyme is formed, which can initiate transcription.

It carries out the reaction RNA(n) + a ribonucleoside 5'-triphosphate = RNA(n+1) + diphosphate. Its function is as follows. DNA-dependent RNA polymerase catalyzes the transcription of DNA into RNA using the four ribonucleoside triphosphates as substrates. In Methylobacillus flagellatus (strain ATCC 51484 / DSM 6875 / VKM B-1610 / KT), this protein is DNA-directed RNA polymerase subunit alpha.